A 206-amino-acid chain; its full sequence is Small ribosomal subunit protein uS4 (206 aa).

An S4 RNA-binding domain is found at 96 to 156; that stretch reads NRLDNVTYRI…KNSKLQSRIK (61 aa).

The protein belongs to the universal ribosomal protein uS4 family. As to quaternary structure, part of the 30S ribosomal subunit. Contacts protein S5. The interaction surface between S4 and S5 is involved in control of translational fidelity.

Functionally, one of the primary rRNA binding proteins, it binds directly to 16S rRNA where it nucleates assembly of the body of the 30S subunit. In terms of biological role, with S5 and S12 plays an important role in translational accuracy. This Buchnera aphidicola subsp. Baizongia pistaciae (strain Bp) protein is Small ribosomal subunit protein uS4.